The primary structure comprises 332 residues: Ketol-acid reductoisomerase (NADP(+)) (332 aa).

The KARI N-terminal Rossmann domain maps to 1–182 (MAVIYYDKDC…GSNRAGILET (182 aa)). NADP(+)-binding positions include 25-28 (YGAQ) and 83-86 (DTSQ). His-108 is a catalytic residue. Gly-134 contributes to the NADP(+) binding site. One can recognise a KARI C-terminal knotted domain in the interval 183 to 328 (TFAEETETDL…AELRSMMSWL (146 aa)). Mg(2+) contacts are provided by Asp-191, Glu-195, Glu-227, and Glu-231. Residue Ser-252 participates in substrate binding.

It belongs to the ketol-acid reductoisomerase family. It depends on Mg(2+) as a cofactor.

It carries out the reaction (2R)-2,3-dihydroxy-3-methylbutanoate + NADP(+) = (2S)-2-acetolactate + NADPH + H(+). The enzyme catalyses (2R,3R)-2,3-dihydroxy-3-methylpentanoate + NADP(+) = (S)-2-ethyl-2-hydroxy-3-oxobutanoate + NADPH + H(+). The protein operates within amino-acid biosynthesis; L-isoleucine biosynthesis; L-isoleucine from 2-oxobutanoate: step 2/4. It functions in the pathway amino-acid biosynthesis; L-valine biosynthesis; L-valine from pyruvate: step 2/4. Functionally, involved in the biosynthesis of branched-chain amino acids (BCAA). Catalyzes an alkyl-migration followed by a ketol-acid reduction of (S)-2-acetolactate (S2AL) to yield (R)-2,3-dihydroxy-isovalerate. In the isomerase reaction, S2AL is rearranged via a Mg-dependent methyl migration to produce 3-hydroxy-3-methyl-2-ketobutyrate (HMKB). In the reductase reaction, this 2-ketoacid undergoes a metal-dependent reduction by NADPH to yield (R)-2,3-dihydroxy-isovalerate. This chain is Ketol-acid reductoisomerase (NADP(+)), found in Dehalococcoides mccartyi (strain CBDB1).